The sequence spans 739 residues: Platelet endothelial cell adhesion molecule (739 aa).

Positions 1–27 are cleaved as a signal peptide; the sequence is MQLRWTQRGMMWLGALLTLLLCSSLKG. The Extracellular portion of the chain corresponds to 28–599; it reads QENSFTINSI…TVRVYLPLEK (572 aa). Ig-like C2-type domains lie at 35–120, 145–213, and 236–315; these read NSIH…EKTT, GGVV…IFSG, and PKFH…SKVS. 3 N-linked (GlcNAc...) asparagine glycosylation sites follow: N52, N84, and N151. C57 and C109 are disulfide-bonded. Disulfide bonds link C152/C206 and C256/C304. N-linked (GlcNAc...) asparagine glycans are attached at residues N301, N320, N356, N371, N435, N446, N453, N550, and N578. 3 consecutive Ig-like C2-type domains span residues 328 to 403, 424 to 493, and 499 to 590; these read PKLE…VQIT, GQTI…EVLR, and PVDE…NTLT. 3 cysteine pairs are disulfide-bonded: C347–C386, C431–C476, and C522–C571. Residues 600-618 form a helical membrane-spanning segment; it reads GLIAVVVIGVIIVTLVLGA. Residues 619 to 739 are Cytoplasmic-facing; it reads KCYFLKKAKA…SRTEGSLDGS (121 aa). Residue C620 is the site of S-palmitoyl cysteine attachment. 2 consecutive short sequence motifs (ITIM motif) follow at residues 687–692 and 712–717; these read VEYTEV and TVYSEI. Phosphotyrosine; by FER occurs at positions 689 and 714. Residues 708-730 are membrane-bound segment which detaches upon phosphorylation; the sequence is TETETVYSEIRKADPDFVENRYS. The interval 722–739 is may play a role in cytoprotective signaling; the sequence is PDFVENRYSRTEGSLDGS. 2 positions are modified to phosphoserine: S730 and S735.

As to quaternary structure, trans-homodimer (via Ig-like C2-type 1 and Ig-like C2-type 2 domains); trans-homodimerization is required for cell-cell interaction. Forms a complex with BDKRB2 and GNAQ. Interacts with BDKRB2 and GNAQ. Interacts with PTPN11; Tyr-714 is critical for PTPN11 recruitment. Interacts with FER. Interacts with CD177; the interaction is Ca(2+)-dependent; the interaction is direct. Post-translationally, phosphorylated on Ser and Tyr residues by src kinases after cellular activation. Upon activation, phosphorylated on Ser-730 which probably initiates the dissociation of the membrane-interaction segment (residues 708-730) from the cell membrane allowing the sequential phosphorylation of Tyr-714 and Tyr-689. Constitutively phosphorylated on Ser-735 in resting platelets. Phosphorylated on tyrosine residues by FER and FES in response to FCER1 activation. In endothelial cells Fyn mediates mechanical-force (stretch or pull) induced tyrosine phosphorylation. Palmitoylation by ZDHHC21 is necessary for cell surface expression in endothelial cells and enrichment in membrane rafts.

It is found in the cell membrane. It localises to the membrane raft. Its subcellular location is the cell junction. Cell adhesion molecule which is required for leukocyte transendothelial migration (TEM) under most inflammatory conditions. Tyr-689 plays a critical role in TEM and is required for efficient trafficking of PECAM1 to and from the lateral border recycling compartment (LBRC) and is also essential for the LBRC membrane to be targeted around migrating leukocytes. Trans-homophilic interaction may play a role in endothelial cell-cell adhesion via cell junctions. Heterophilic interaction with CD177 plays a role in transendothelial migration of neutrophils. Homophilic ligation of PECAM1 prevents macrophage-mediated phagocytosis of neighboring viable leukocytes by transmitting a detachment signal. Promotes macrophage-mediated phagocytosis of apoptotic leukocytes by tethering them to the phagocytic cells; PECAM1-mediated detachment signal appears to be disabled in apoptotic leukocytes. Modulates bradykinin receptor BDKRB2 activation. Regulates bradykinin- and hyperosmotic shock-induced ERK1/2 activation in endothelial cells. Induces susceptibility to atherosclerosis. The polypeptide is Platelet endothelial cell adhesion molecule (PECAM1) (Bos taurus (Bovine)).